The primary structure comprises 360 residues: Glutamine synthetase (360 aa).

Residues 26–105 (IMAEYIWIDA…VLSECWNADG (80 aa)) form the GS beta-grasp domain. A GS catalytic domain is found at 112–360 (YRHECAKLME…METIYGSVDN (249 aa)).

This sequence belongs to the glutamine synthetase family. As to quaternary structure, homooctamer.

The protein resides in the cytoplasm. The enzyme catalyses L-glutamate + NH4(+) + ATP = L-glutamine + ADP + phosphate + H(+). In Colletotrichum gloeosporioides (Anthracnose fungus), this protein is Glutamine synthetase (GLN1).